We begin with the raw amino-acid sequence, 302 residues long: Light-independent protochlorophyllide reductase iron-sulfur ATP-binding protein (302 aa).

Polar residues predominate over residues Met-1 to Gln-10. Residues Met-1–Gly-21 are disordered. Residues Gly-46 to Thr-51 and Lys-75 contribute to the ATP site. Ser-50 serves as a coordination point for Mg(2+). Cys-131 and Cys-165 together coordinate [4Fe-4S] cluster. ATP contacts are provided by residues Asn-216–Arg-217 and Pro-240–Leu-242.

The protein belongs to the NifH/BchL/ChlL family. As to quaternary structure, homodimer. Protochlorophyllide reductase is composed of three subunits; BchL, BchN and BchB. It depends on [4Fe-4S] cluster as a cofactor.

The enzyme catalyses chlorophyllide a + oxidized 2[4Fe-4S]-[ferredoxin] + 2 ADP + 2 phosphate = protochlorophyllide a + reduced 2[4Fe-4S]-[ferredoxin] + 2 ATP + 2 H2O. Its pathway is porphyrin-containing compound metabolism; bacteriochlorophyll biosynthesis (light-independent). Its function is as follows. Component of the dark-operative protochlorophyllide reductase (DPOR) that uses Mg-ATP and reduced ferredoxin to reduce ring D of protochlorophyllide (Pchlide) to form chlorophyllide a (Chlide). This reaction is light-independent. The L component serves as a unique electron donor to the NB-component of the complex, and binds Mg-ATP. The sequence is that of Light-independent protochlorophyllide reductase iron-sulfur ATP-binding protein from Rubrivivax gelatinosus (strain NBRC 100245 / IL144).